A 353-amino-acid chain; its full sequence is Photosystem II protein D1 (353 aa).

Thr2 bears the N-acetylthreonine mark. Thr2 bears the Phosphothreonine mark. 3 helical membrane-spanning segments follow: residues 29–46 (NIGW…TATS), 118–133 (HFLL…EWEL), and 142–156 (WIAV…AATA). His118 serves as a coordination point for chlorophyll a. A pheophytin a-binding site is contributed by Tyr126. [CaMn4O5] cluster-binding residues include Asp170 and Glu189. A helical transmembrane segment spans residues 197–218 (FHMLGVAGVFGGSLFSAMHGSL). His198 is a chlorophyll a binding site. A quinone-binding positions include His215 and 264–265 (SF). Position 215 (His215) interacts with Fe cation. Residue His272 coordinates Fe cation. The chain crosses the membrane as a helical span at residues 274-288 (FLAAWPVVGIWFTAL). 4 residues coordinate [CaMn4O5] cluster: His332, Glu333, Asp342, and Ala344. A propeptide spanning residues 345 to 353 (AVEAPAVNG) is cleaved from the precursor.

It belongs to the reaction center PufL/M/PsbA/D family. As to quaternary structure, PSII is composed of 1 copy each of membrane proteins PsbA, PsbB, PsbC, PsbD, PsbE, PsbF, PsbH, PsbI, PsbJ, PsbK, PsbL, PsbM, PsbT, PsbX, PsbY, PsbZ, Psb30/Ycf12, at least 3 peripheral proteins of the oxygen-evolving complex and a large number of cofactors. It forms dimeric complexes. Requires The D1/D2 heterodimer binds P680, chlorophylls that are the primary electron donor of PSII, and subsequent electron acceptors. It shares a non-heme iron and each subunit binds pheophytin, quinone, additional chlorophylls, carotenoids and lipids. D1 provides most of the ligands for the Mn4-Ca-O5 cluster of the oxygen-evolving complex (OEC). There is also a Cl(-1) ion associated with D1 and D2, which is required for oxygen evolution. The PSII complex binds additional chlorophylls, carotenoids and specific lipids. as cofactor. Tyr-161 forms a radical intermediate that is referred to as redox-active TyrZ, YZ or Y-Z. Post-translationally, C-terminally processed by CTPA; processing is essential to allow assembly of the oxygen-evolving complex and thus photosynthetic growth.

The protein localises to the plastid. Its subcellular location is the chloroplast thylakoid membrane. The enzyme catalyses 2 a plastoquinone + 4 hnu + 2 H2O = 2 a plastoquinol + O2. In terms of biological role, photosystem II (PSII) is a light-driven water:plastoquinone oxidoreductase that uses light energy to abstract electrons from H(2)O, generating O(2) and a proton gradient subsequently used for ATP formation. It consists of a core antenna complex that captures photons, and an electron transfer chain that converts photonic excitation into a charge separation. The D1/D2 (PsbA/PsbD) reaction center heterodimer binds P680, the primary electron donor of PSII as well as several subsequent electron acceptors. This Dumortiera hirsuta (Liverwort) protein is Photosystem II protein D1.